A 345-amino-acid chain; its full sequence is Selenide, water dikinase (345 aa).

The active site involves C16. ATP contacts are provided by residues K19 and 46–48 (TSD). D49 is a binding site for Mg(2+). Residues D66, D89, and 136–138 (GHT) each bind ATP. D89 contributes to the Mg(2+) binding site. A Mg(2+)-binding site is contributed by D224.

The protein belongs to the selenophosphate synthase 1 family. Class I subfamily. Homodimer. Requires Mg(2+) as cofactor.

It carries out the reaction hydrogenselenide + ATP + H2O = selenophosphate + AMP + phosphate + 2 H(+). Its function is as follows. Synthesizes selenophosphate from selenide and ATP. This chain is Selenide, water dikinase, found in Clostridium botulinum (strain Alaska E43 / Type E3).